Reading from the N-terminus, the 1495-residue chain is Terminal uridylyltransferase 7 (1495 aa).

4 disordered regions span residues M1–Q30, H43–P69, W89–Y140, and L162–D205. Over residues D15–R26 the composition is skewed to basic and acidic residues. Phosphothreonine occurs at positions 57 and 64. Composition is skewed to basic and acidic residues over residues D92 to P118 and Q128 to Y140. Residues S132 and S172 each carry the phosphoserine modification. The segment covering Q178–K187 has biased composition (basic residues). A Matrin-type zinc finger spans residues Y244–E274. The PAP-associated 1 domain occupies V551–S600. S600 is subject to Phosphoserine. Over residues D734–G756 the composition is skewed to basic and acidic residues. Disordered stretches follow at residues D734–R757 and T831–E898. The span at T831 to M841 shows a compositional bias: polar residues. Composition is skewed to acidic residues over residues P843–E859, E868–D880, and G887–E898. Phosphoserine is present on S844. Phosphoserine is present on residues S893 and S939. Residues S951–S1495 form a sufficient for monouridylation activity region. Residues V963–E980 form a CCHC-type 1 zinc finger. UTP is bound by residues S1047–N1050, S1057–D1060, N1130, K1152, S1170–T1174, and H1286. Mg(2+) contacts are provided by D1058 and D1060. Positions S1233 to H1286 constitute a PAP-associated 2 domain. The segment at R1345–M1362 adopts a CCHC-type 2 zinc-finger fold. Disordered regions lie at residues R1367–A1424 and C1466–S1495. Positions P1381–P1410 are enriched in basic and acidic residues. The segment at K1451–Q1468 adopts a CCHC-type 3 zinc-finger fold. A compositionally biased stretch (polar residues) spans K1470–K1485.

The protein belongs to the DNA polymerase type-B-like family. In terms of assembly, interacts with MOV10; the interaction is RNA-dependent. Mg(2+) serves as cofactor. Mn(2+) is required as a cofactor.

It localises to the cytoplasm. It carries out the reaction RNA(n) + UTP = RNA(n)-3'-uridine ribonucleotide + diphosphate. In terms of biological role, uridylyltransferase that mediates the terminal uridylation of mRNAs with short (less than 25 nucleotides) poly(A) tails, hence facilitating global mRNA decay. Essential for both oocyte maturation and fertility. Through 3' terminal uridylation of mRNA, sculpts, with TUT7, the maternal transcriptome by eliminating transcripts during oocyte growth. Involved in microRNA (miRNA)-induced gene silencing through uridylation of deadenylated miRNA targets. Also functions as an integral regulator of microRNA biogenesiS using 3 different uridylation mechanisms. Acts as a suppressor of miRNA biogenesis by mediating the terminal uridylation of some miRNA precursors, including that of let-7 (pre-let-7). Uridylated pre-let-7 RNA is not processed by Dicer and undergo degradation. Pre-let-7 uridylation is strongly enhanced in the presence of LIN28A. In the absence of LIN28A, TUT7 and TUT4 monouridylate group II pre-miRNAs, which includes most of pre-let7 members, that shapes an optimal 3' end overhang for efficient processing. Add oligo-U tails to truncated pre-miRNAS with a 5' overhang which may promote rapid degradation of non-functional pre-miRNA species. Does not play a role in replication-dependent histone mRNA degradation. Due to functional redundancy between TUT4 and TUT7, the identification of the specific role of each of these proteins is difficult. TUT4 and TUT7 restrict retrotransposition of long interspersed element-1 (LINE-1) in cooperation with MOV10 counteracting the RNA chaperonne activity of L1RE1. TUT7 uridylates LINE-1 mRNAs in the cytoplasm which inhibits initiation of reverse transcription once in the nucleus, whereas uridylation by TUT4 destabilizes mRNAs in cytoplasmic ribonucleoprotein granules. The protein is Terminal uridylyltransferase 7 of Homo sapiens (Human).